The sequence spans 260 residues: Imidazole glycerol phosphate synthase subunit HisF (260 aa).

Active-site residues include D11 and D130.

The protein belongs to the HisA/HisF family. As to quaternary structure, heterodimer of HisH and HisF.

It localises to the cytoplasm. It carries out the reaction 5-[(5-phospho-1-deoxy-D-ribulos-1-ylimino)methylamino]-1-(5-phospho-beta-D-ribosyl)imidazole-4-carboxamide + L-glutamine = D-erythro-1-(imidazol-4-yl)glycerol 3-phosphate + 5-amino-1-(5-phospho-beta-D-ribosyl)imidazole-4-carboxamide + L-glutamate + H(+). Its pathway is amino-acid biosynthesis; L-histidine biosynthesis; L-histidine from 5-phospho-alpha-D-ribose 1-diphosphate: step 5/9. Functionally, IGPS catalyzes the conversion of PRFAR and glutamine to IGP, AICAR and glutamate. The HisF subunit catalyzes the cyclization activity that produces IGP and AICAR from PRFAR using the ammonia provided by the HisH subunit. The sequence is that of Imidazole glycerol phosphate synthase subunit HisF from Psychrobacter cryohalolentis (strain ATCC BAA-1226 / DSM 17306 / VKM B-2378 / K5).